A 105-amino-acid polypeptide reads, in one-letter code: MYAVIATGGKQYKVGEGEIVRVEKLPGEVGDTVRLDQVLLFSDGENVKVGQPTVENVAVDAQIVEQGKAKKVLVFRFKRRKGYRKKQGHRQPFTALKINKIEAGA.

It belongs to the bacterial ribosomal protein bL21 family. In terms of assembly, part of the 50S ribosomal subunit. Contacts protein L20.

Its function is as follows. This protein binds to 23S rRNA in the presence of protein L20. The protein is Large ribosomal subunit protein bL21 of Desulfatibacillum aliphaticivorans.